Here is a 108-residue protein sequence, read N- to C-terminus: DNA-binding protein HBbu (108 aa).

It belongs to the bacterial histone-like protein family.

Its function is as follows. Histone-like DNA-binding protein which is capable of wrapping DNA to stabilize it, and thus to prevent its denaturation under extreme environmental conditions. In Borrelia garinii subsp. bavariensis (strain ATCC BAA-2496 / DSM 23469 / PBi) (Borreliella bavariensis), this protein is DNA-binding protein HBbu (hbb).